We begin with the raw amino-acid sequence, 358 residues long: Aminomethyltransferase (358 aa).

This sequence belongs to the GcvT family. As to quaternary structure, the glycine cleavage system is composed of four proteins: P, T, L and H.

It carries out the reaction N(6)-[(R)-S(8)-aminomethyldihydrolipoyl]-L-lysyl-[protein] + (6S)-5,6,7,8-tetrahydrofolate = N(6)-[(R)-dihydrolipoyl]-L-lysyl-[protein] + (6R)-5,10-methylene-5,6,7,8-tetrahydrofolate + NH4(+). Its function is as follows. The glycine cleavage system catalyzes the degradation of glycine. The polypeptide is Aminomethyltransferase (Francisella tularensis subsp. holarctica (strain FTNF002-00 / FTA)).